A 327-amino-acid chain; its full sequence is MSSQFDQLKLWSVLVGDSGDPDLIKTLDVQDATTNPSLILKVAQEPKYQSMLTEAISWGIRQNGDDVQTLTFVLDKIQVNLGLEILKYVPGRVSLEIDARLSFNTEAMVQRAIFLSQLFEKMGGDKKRLLIKIPGTWEGIRAAEVLENQGIACNVTLIFSLVQAIAAAKAKVTLVSPFVGRIYDWWIAAYGAEGYSIEADPGVASVANIYSYYKKFDIPTQIMAASFRTKEQVLALAGCDFLTISPKILEELKKEQQPVERKLSVEEAKKLDIQPVELSESVFRFLMNEDAMATEKLAEGIRIFSGDTQILESAVTEFIRQIAAQEA.

Lys-132 acts as the Schiff-base intermediate with substrate in catalysis.

The protein belongs to the transaldolase family. Type 1 subfamily.

It localises to the cytoplasm. The enzyme catalyses D-sedoheptulose 7-phosphate + D-glyceraldehyde 3-phosphate = D-erythrose 4-phosphate + beta-D-fructose 6-phosphate. It functions in the pathway carbohydrate degradation; pentose phosphate pathway; D-glyceraldehyde 3-phosphate and beta-D-fructose 6-phosphate from D-ribose 5-phosphate and D-xylulose 5-phosphate (non-oxidative stage): step 2/3. Functionally, transaldolase is important for the balance of metabolites in the pentose-phosphate pathway. In Chlamydia muridarum (strain MoPn / Nigg), this protein is Transaldolase.